We begin with the raw amino-acid sequence, 174 residues long: Ribosome maturation factor RimM (174 aa).

The region spanning 96-170 (PDEFYDHELE…YVVIDPPEGL (75 aa)) is the PRC barrel domain.

This sequence belongs to the RimM family. As to quaternary structure, binds ribosomal protein uS19.

Its subcellular location is the cytoplasm. An accessory protein needed during the final step in the assembly of 30S ribosomal subunit, possibly for assembly of the head region. Essential for efficient processing of 16S rRNA. May be needed both before and after RbfA during the maturation of 16S rRNA. It has affinity for free ribosomal 30S subunits but not for 70S ribosomes. The sequence is that of Ribosome maturation factor RimM from Nocardia farcinica (strain IFM 10152).